A 565-amino-acid chain; its full sequence is UV-stimulated scaffold protein A homolog (565 aa).

The VHS-like stretch occupies residues 11-156; the sequence is RKNLNRILQE…VTLRKTKFVD (146 aa). Positions 155 to 215 form a coiled coil; that stretch reads VDYENGEKKI…ELETTMEMLV (61 aa). The UVSSA-type zinc finger occupies 441–468; that stretch reads DRECLAKLPSGALCKRKDMFKCPLHGPL. Zn(2+) is bound by residues cysteine 444, cysteine 454, cysteine 462, and histidine 465. The stretch at 480 to 510 forms a coiled coil; it reads DEDRLKEIDRKERKRLKEAEEFSRKIVKEYE. 2 disordered regions span residues 510–530 and 542–565; these read ESKT…SRLQ and VSAD…FSHL.

The protein belongs to the UVSSA family.

The protein resides in the chromosome. Factor involved in transcription-coupled nucleotide excision repair (TC-NER) in response to UV damage. TC-NER allows RNA polymerase II-blocking lesions to be rapidly removed from the transcribed strand of active genes. The protein is UV-stimulated scaffold protein A homolog of Caenorhabditis briggsae.